Consider the following 153-residue polypeptide: Large ribosomal subunit protein uL30 (153 aa).

Belongs to the universal ribosomal protein uL30 family. Part of the 50S ribosomal subunit.

The chain is Large ribosomal subunit protein uL30 from Methanosarcina barkeri (strain Fusaro / DSM 804).